The following is a 563-amino-acid chain: Pyruvate decarboxylase isozyme 3 (563 aa).

Ser2 carries the N-acetylserine modification. Pyruvate contacts are provided by Asp28 and His115. Lys212 participates in a covalent cross-link: Glycyl lysine isopeptide (Lys-Gly) (interchain with G-Cter in ubiquitin). Ser223 carries the post-translational modification Phosphoserine. A Glycyl lysine isopeptide (Lys-Gly) (interchain with G-Cter in ubiquitin) cross-link involves residue Lys233. A Phosphothreonine modification is found at Thr266. A Glycyl lysine isopeptide (Lys-Gly) (interchain with G-Cter in ubiquitin) cross-link involves residue Lys269. Thr353 is modified (phosphothreonine). Thiamine diphosphate is bound by residues Thr390 and 413–415; that span reads GSI. Asp444 contacts Mg(2+). Thiamine diphosphate contacts are provided by residues 445-446 and 471-476; these read GS and NDGYTI. Asn471 and Gly473 together coordinate Mg(2+). Glu477 contacts pyruvate. A Glycyl lysine isopeptide (Lys-Gly) (interchain with G-Cter in ubiquitin) cross-link involves residue Lys505. At Thr522 the chain carries Phosphothreonine.

This sequence belongs to the TPP enzyme family. As to quaternary structure, homotetramer. Mg(2+) is required as a cofactor. It depends on thiamine diphosphate as a cofactor.

It localises to the cytoplasm. It carries out the reaction pyruvate + H(+) = acetaldehyde + CO2. The enzyme catalyses 3-methyl-2-oxobutanoate + H(+) = 2-methylpropanal + CO2. The catalysed reaction is (S)-3-methyl-2-oxopentanoate + H(+) = 2-methylbutanal + CO2. It catalyses the reaction indole-3-pyruvate + H(+) = indole-3-acetaldehyde + CO2. It carries out the reaction 3-phenylpyruvate + H(+) = 2-phenylacetaldehyde + CO2. The enzyme catalyses 2-oxobutanoate + H(+) = propanal + CO2. The catalysed reaction is 2-oxopentanoate + H(+) = butanal + CO2. It catalyses the reaction 2 acetaldehyde = acetoin. It carries out the reaction acetaldehyde + pyruvate + H(+) = acetoin + CO2. The protein operates within fermentation; ethanol fermentation. It participates in amino-acid degradation; Ehrlich pathway. In terms of biological role, minor of three pyruvate decarboxylases (PDC1, PDC5, PDC6) implicated in the nonoxidative conversion of pyruvate to acetaldehyde and carbon dioxide during alcoholic fermentation. Most of the produced acetaldehyde is subsequently reduced to ethanol, but some is required for cytosolic acetyl-CoA production for biosynthetic pathways. The enzyme is also one of five 2-oxo acid decarboxylases (PDC1, PDC5, PDC6, ARO10, and THI3) able to decarboxylate more complex 2-oxo acids (alpha-keto-acids) than pyruvate, which seem mainly involved in amino acid catabolism. Here the enzyme catalyzes the decarboxylation of amino acids, which, in a first step, have been transaminated to the corresponding 2-oxo acids. In a third step, the resulting aldehydes are reduced to alcohols, collectively referred to as fusel oils or alcohols. Its preferred substrates are the transaminated amino acids derived from threonine (2-oxobutanoate), norvaline (2-oxopentanoate), valine (3-methyl-2-oxobutanoate, also alpha-keto-isovalerate), isoleucine ((3S)-3-methyl-2-oxopentanoate, also alpha-keto-beta-methylvalerate), phenylalanine (phenylpyruvate), and tryptophan (3-(indol-3-yl)pyruvate), whereas transaminated leucine is no substrate. In a side-reaction the carbanionic intermediate (or active aldehyde) generated by decarboxylation or by activation of an aldehyde can react with an aldehyde via condensation (or carboligation) yielding a 2-hydroxy ketone, collectively called acyloins. The expression level of this protein in the presence of fermentable carbon sources is so low that it cannot compensate for the other two pyruvate decarboxylases to sustain fermentation. The polypeptide is Pyruvate decarboxylase isozyme 3 (PDC6) (Saccharomyces cerevisiae (strain ATCC 204508 / S288c) (Baker's yeast)).